Consider the following 1671-residue polypeptide: DENN domain-containing protein Crag (1671 aa).

The region spanning I39–M195 is the MABP domain. The uDENN domain maps to V187 to I364. Residues P385 to T521 enclose the cDENN domain. The 110-residue stretch at L523–H632 folds into the dDENN domain. Disordered regions lie at residues Q997 to S1160, A1245 to E1311, and V1415 to N1435. Composition is skewed to acidic residues over residues G1011 to Y1023 and Y1050 to D1061. Positions R1072–D1089 are enriched in polar residues. Low complexity predominate over residues A1100–Q1119. The span at R1136–G1147 shows a compositional bias: polar residues. Residues N1254–Q1277 are compositionally biased toward basic residues. Residues A1281–S1301 are compositionally biased toward basic and acidic residues.

In terms of assembly, interacts with Cam. Interacts with Rab10. Interacts (via the DENN domains) with Rab11. As to expression, expressed in the adult head and body.

The protein resides in the cytoplasm. Its subcellular location is the cell cortex. The protein localises to the early endosome. It localises to the recycling endosome. It is found in the cytoplasmic granule. Its function is as follows. Calmodulin-binding protein that acts as a guanine exchange factor for Rab10 and Rab11. Essential for maintenance of adult photoreceptor cells. Upon light stimulation, required for trafficking of newly synthesized ninaE (Rh1) from the trans-Golgi network to rhabdomere membranes via Rab11-dependent vesicular transport. During egg development, essential for establishing and maintaining epithelial cell polarity by regulating the correct polarized deposition of basal membrane (BM) proteins in follicular epithelial (FE) cells. Functions by targeting Rab10 to the basal cytoplasm, where it restricts the secretion of BM proteins such as trol/Pcan and vkg/Coll IV to the basal surface. Appears to be involved in regulating the levels and distribution of the guanine nucleotide exchange factor strat, however the two proteins appear to have independent roles in regulating polarized BM protein secretion in the FE. The polypeptide is DENN domain-containing protein Crag (Drosophila melanogaster (Fruit fly)).